The primary structure comprises 89 residues: Tuberculin-active protein (89 aa).

A disulfide bond links C27 and C59. The disordered stretch occupies residues 61-89; sequence DGGSESEGKNGSQMRLIADVGPESATVAK.

Tuberculin is the soluble, proteinaceous cell substance of the bacterium, to which infected animals become hypersensitive and react characteristically to dermal injections. The protein is Tuberculin-active protein of Mycobacterium tuberculosis.